Here is a 160-residue protein sequence, read N- to C-terminus: SsrA-binding protein (160 aa).

It belongs to the SmpB family.

The protein localises to the cytoplasm. Functionally, required for rescue of stalled ribosomes mediated by trans-translation. Binds to transfer-messenger RNA (tmRNA), required for stable association of tmRNA with ribosomes. tmRNA and SmpB together mimic tRNA shape, replacing the anticodon stem-loop with SmpB. tmRNA is encoded by the ssrA gene; the 2 termini fold to resemble tRNA(Ala) and it encodes a 'tag peptide', a short internal open reading frame. During trans-translation Ala-aminoacylated tmRNA acts like a tRNA, entering the A-site of stalled ribosomes, displacing the stalled mRNA. The ribosome then switches to translate the ORF on the tmRNA; the nascent peptide is terminated with the 'tag peptide' encoded by the tmRNA and targeted for degradation. The ribosome is freed to recommence translation, which seems to be the essential function of trans-translation. This Pectobacterium atrosepticum (strain SCRI 1043 / ATCC BAA-672) (Erwinia carotovora subsp. atroseptica) protein is SsrA-binding protein.